The chain runs to 295 residues: Protoheme IX farnesyltransferase (295 aa).

Transmembrane regions (helical) follow at residues leucine 30–isoleucine 50, alanine 51–tryptophan 71, isoleucine 93–isoleucine 115, tyrosine 119–tyrosine 136, isoleucine 148–glycine 168, leucine 175–leucine 195, isoleucine 219–leucine 239, leucine 244–phenylalanine 264, and methionine 275–phenylalanine 295.

This sequence belongs to the UbiA prenyltransferase family. Protoheme IX farnesyltransferase subfamily.

The protein localises to the cell inner membrane. It catalyses the reaction heme b + (2E,6E)-farnesyl diphosphate + H2O = Fe(II)-heme o + diphosphate. It participates in porphyrin-containing compound metabolism; heme O biosynthesis; heme O from protoheme: step 1/1. In terms of biological role, converts heme B (protoheme IX) to heme O by substitution of the vinyl group on carbon 2 of heme B porphyrin ring with a hydroxyethyl farnesyl side group. In Ehrlichia ruminantium (strain Gardel), this protein is Protoheme IX farnesyltransferase.